Reading from the N-terminus, the 329-residue chain is Biotin synthase (329 aa).

One can recognise a Radical SAM core domain in the interval 36–260; the sequence is GEIQLCTLLS…VAVARITMPK (225 aa). Residues cysteine 51, cysteine 55, and cysteine 58 each contribute to the [4Fe-4S] cluster site. Cysteine 95, cysteine 126, cysteine 186, and arginine 264 together coordinate [2Fe-2S] cluster.

The protein belongs to the radical SAM superfamily. Biotin synthase family. In terms of assembly, homodimer. Requires [4Fe-4S] cluster as cofactor. [2Fe-2S] cluster serves as cofactor.

The catalysed reaction is (4R,5S)-dethiobiotin + (sulfur carrier)-SH + 2 reduced [2Fe-2S]-[ferredoxin] + 2 S-adenosyl-L-methionine = (sulfur carrier)-H + biotin + 2 5'-deoxyadenosine + 2 L-methionine + 2 oxidized [2Fe-2S]-[ferredoxin]. It functions in the pathway cofactor biosynthesis; biotin biosynthesis; biotin from 7,8-diaminononanoate: step 2/2. Functionally, catalyzes the conversion of dethiobiotin (DTB) to biotin by the insertion of a sulfur atom into dethiobiotin via a radical-based mechanism. The protein is Biotin synthase of Sphingopyxis alaskensis (strain DSM 13593 / LMG 18877 / RB2256) (Sphingomonas alaskensis).